Consider the following 247-residue polypeptide: Small ribosomal subunit protein uS3 (247 aa).

A KH type-2 domain is found at 39-111; sequence IYDFFDKKVR…NISIQVIELK (73 aa). A disordered region spans residues 221–247; the sequence is EEMDLLNAPKDRRVRRGGERHASTKKN. A compositionally biased stretch (basic and acidic residues) spans 236 to 247; that stretch reads RGGERHASTKKN.

This sequence belongs to the universal ribosomal protein uS3 family. In terms of assembly, part of the 30S ribosomal subunit. Forms a tight complex with proteins S10 and S14.

Its function is as follows. Binds the lower part of the 30S subunit head. Binds mRNA in the 70S ribosome, positioning it for translation. In Metamycoplasma arthritidis (strain 158L3-1) (Mycoplasma arthritidis), this protein is Small ribosomal subunit protein uS3.